The primary structure comprises 66 residues: UPF0434 protein Nwi_0075 (66 aa).

Belongs to the UPF0434 family.

This is UPF0434 protein Nwi_0075 from Nitrobacter winogradskyi (strain ATCC 25391 / DSM 10237 / CIP 104748 / NCIMB 11846 / Nb-255).